The chain runs to 355 residues: S-adenosylmethionine:tRNA ribosyltransferase-isomerase (355 aa).

It belongs to the QueA family. Monomer.

The protein localises to the cytoplasm. The catalysed reaction is 7-aminomethyl-7-carbaguanosine(34) in tRNA + S-adenosyl-L-methionine = epoxyqueuosine(34) in tRNA + adenine + L-methionine + 2 H(+). It participates in tRNA modification; tRNA-queuosine biosynthesis. Transfers and isomerizes the ribose moiety from AdoMet to the 7-aminomethyl group of 7-deazaguanine (preQ1-tRNA) to give epoxyqueuosine (oQ-tRNA). The protein is S-adenosylmethionine:tRNA ribosyltransferase-isomerase of Aeromonas hydrophila subsp. hydrophila (strain ATCC 7966 / DSM 30187 / BCRC 13018 / CCUG 14551 / JCM 1027 / KCTC 2358 / NCIMB 9240 / NCTC 8049).